We begin with the raw amino-acid sequence, 800 residues long: DNA topoisomerase 4 subunit A (800 aa).

In terms of domain architecture, Topo IIA-type catalytic spans 31–495 (LPDVRDGLKP…EIEEIKIDKE (465 aa)). Residue Y119 is the O-(5'-phospho-DNA)-tyrosine intermediate of the active site.

The protein belongs to the type II topoisomerase GyrA/ParC subunit family. ParC type 2 subfamily. In terms of assembly, heterotetramer composed of ParC and ParE.

It localises to the cell membrane. It carries out the reaction ATP-dependent breakage, passage and rejoining of double-stranded DNA.. Functionally, topoisomerase IV is essential for chromosome segregation. It relaxes supercoiled DNA. Performs the decatenation events required during the replication of a circular DNA molecule. The polypeptide is DNA topoisomerase 4 subunit A (Staphylococcus aureus).